Reading from the N-terminus, the 540-residue chain is Phosphatidylinositol 4-phosphate 5-kinase type-1 beta (540 aa).

Positions methionine 1–lysine 23 are disordered. A PIPK domain is found at threonine 25–valine 395.

It localises to the cytoplasm. The protein resides in the cytosol. It is found in the cell membrane. Its subcellular location is the endomembrane system. It carries out the reaction a 1,2-diacyl-sn-glycero-3-phospho-(1D-myo-inositol 4-phosphate) + ATP = a 1,2-diacyl-sn-glycero-3-phospho-(1D-myo-inositol-4,5-bisphosphate) + ADP + H(+). The enzyme catalyses 1-octadecanoyl-2-(5Z,8Z,11Z,14Z)-eicosatetraenoyl-sn-glycero-3-phospho-1D-myo-inositol 4-phosphate + ATP = 1-octadecanoyl-2-(5Z,8Z,11Z,14Z)-eicosatetraenoyl-sn-glycero-3-phospho-1D-myo-inositol 4,5-bisphosphate + ADP + H(+). The catalysed reaction is 1-octadecanoyl-2-(9Z)-octadecenoyl-sn-glycero-3-phospho-1D-myo-inositol 4-phosphate + ATP = 1-octadecanoyl-2-(9Z)-octadecenoyl-sn-glycero-3-phospho-1D-myo-inositol 4,5-bisphosphate + ADP + H(+). It catalyses the reaction 1-octadecanoyl-2-(9Z)-octadecenoyl-sn-glycero-3-phospho-1D-myo-inositol + ATP = 1-octadecanoyl-2-(9Z)-octadecenoyl-sn-glycero-3-phospho-1D-myo-inositol 5-phosphate + ADP + H(+). It carries out the reaction 1-octadecanoyl-2-(9Z,12Z)-octadecadienoyl-sn-glycero-3-phospho-1D-myo-inositol + ATP = 1-octadecanoyl-2-(9Z,12Z)-octadecadienoyl-sn-glycero-3-phospho-1D-myo-inositol 5-phosphate + ADP + H(+). The enzyme catalyses 1-octadecanoyl-2-(5Z,8Z,11Z,14Z-eicosatetraenoyl)-sn-glycero-3-phospho-(1D-myo-inositol) + ATP = 1-octadecanoyl-2-(5Z,8Z,11Z,14Z)-eicosatetraenoyl-sn-glycero-3-phospho-1D-myo-inositol 5-phosphate + ADP + H(+). The catalysed reaction is 1,2-di-(9Z,12Z)-octadecadienoyl-sn-glycero-3-phospho-1D-myo-inositol + ATP = 1,2-di(9Z,12Z)-octadecadienoyl-sn-glycero-3-phospho-1D-myo-inositol 5-phosphate + ADP + H(+). In terms of biological role, catalyzes the phosphorylation of phosphatidylinositol 4-phosphate (PtdIns(4)P/PI4P) to form phosphatidylinositol 4,5-bisphosphate (PtdIns(4,5)P2/PIP2), a lipid second messenger that regulates several cellular processes such as signal transduction, vesicle trafficking, actin cytoskeleton dynamics, cell adhesion, and cell motility. PtdIns(4,5)P2 can directly act as a second messenger or can be utilized as a precursor to generate other second messengers: inositol 1,4,5-trisphosphate (IP3), diacylglycerol (DAG) or phosphatidylinositol-3,4,5-trisphosphate (PtdIns(3,4,5)P3/PIP3). The sequence is that of Phosphatidylinositol 4-phosphate 5-kinase type-1 beta (PIP5K1B) from Gallus gallus (Chicken).